Consider the following 22-residue polypeptide: Proline-rich peptide (22 aa).

Residues 1-22 (FVDRNRIPRSNNGPKIPIISNP) are disordered.

Its subcellular location is the secreted. In terms of biological role, antibacterial peptide active against Gram-positive bacterium M.luteus and Gram-negative bacterium E.coli. This chain is Proline-rich peptide, found in Calliphora vicina (Blue blowfly).